The primary structure comprises 515 residues: Cytochrome P450 monooxygenase paxP (515 aa).

The chain crosses the membrane as a helical span at residues 20–36; sequence SLLWKLGVFAVLVYFLL. Cys-456 is a heme binding site.

This sequence belongs to the cytochrome P450 family. Requires heme as cofactor.

The protein localises to the membrane. The protein operates within secondary metabolite biosynthesis. In terms of biological role, cytochrome P450 monooxygenase; part of the ATM2 gene cluster that mediates the biosynthesis of paxilline, a mycotoxin that acts as an inhibitor of mammalian maxi-K channels. PaxG, the geranylgeranyl diphosphate (GGPP) synthase is proposed to catalyze the first step in paxilline biosynthesis. Condensation of indole-3-glycerol phosphate with GGPP by paxC then forms 3-geranylgeranylindole (3-GGI), followed by epoxidation and cyclization of this intermediate (by paxM and paxB) to form paspaline. Paspaline is subsequently converted to 13-desoxypaxilline by paxP, the latter being then converted to paxilline by paxQ. Finally paxilline can be mono- and di-prenylated by paxD. PaxP can also utilized beta-paxitriol and alpha-PC-M6 as substrates converting them to paxilline. The protein is Cytochrome P450 monooxygenase paxP of Penicillium paxilli.